Here is a 486-residue protein sequence, read N- to C-terminus: Patatin-like phospholipase domain-containing protein 2 (486 aa).

Residues 1-8 (MFPKETTW) are Cytoplasmic-facing. Residues 9 to 29 (NISFAGCGFLGVYHIGVASCL) traverse the membrane as a helical segment. The PNPLA domain occupies 10-179 (ISFAGCGFLG…SDNLPLYELK (170 aa)). The GXGXXG motif lies at 14–19 (GCGFLG). Residues 30-42 (REHAPFLVANATH) are Extracellular-facing. Asn-39 carries N-linked (GlcNAc...) asparagine glycosylation. Residues 43–63 (IYGASAGALTATALVTGACLG) traverse the membrane as a helical segment. Residues 45 to 49 (GASAG) carry the GXSXG motif. The active-site Nucleophile is the Ser-47. Over 64–137 (EAGANIIEVS…IITHFNSKEE (74 aa)) the chain is Cytoplasmic. Lys-92 is covalently cross-linked (Glycyl lysine isopeptide (Lys-Gly) (interchain with G-Cter in ubiquitin)). The helical transmembrane segment at 138-158 (LIQANVCSTFIPVYCGLIPPS) threads the bilayer. Topologically, residues 159–334 (LQGVRYVDGG…TTLSNMLPVR (176 aa)) are extracellular. Asp-166 functions as the Proton acceptor in the catalytic mechanism. Residues 166–168 (DGG) carry the DGA/G motif. A helical membrane pass occupies residues 335–355 (LAMAMMVPYTLPLESAVSFTI). Residues 356–486 (RLLEWLPDVP…PQHPPSSPPC (131 aa)) lie on the Cytoplasmic side of the membrane. At Ser-377 the chain carries Phosphoserine; in vitro. Phosphoserine; by PKA occurs at positions 399 and 409. Ser-433 carries the post-translational modification Phosphoserine; in vitro.

Interacts with ABHD5; this association stimulates PNPLA2 triglyceride hydrolase activity. Interacts with SERPINF1; this interaction stimulates the phospholipase A2 activity of PNPLA2. Despite a colocalization in lipid droplets, it probably does not interact with PLIN. Interacts with PLIN5; prevents interaction with ABHD5. Interacts with FAF2. In terms of processing, phosphorylation at Ser-409 by PKA is increased during fasting and moderate intensity exercise, and moderately increases lipolytic activity. Ubiquitinated by PEX2 in response to reactive oxygen species (ROS), leading to its degradation. Ubiquitination is stimulated by LDAH.

It localises to the lipid droplet. The protein resides in the cell membrane. The protein localises to the cytoplasm. It catalyses the reaction a triacylglycerol + H2O = a diacylglycerol + a fatty acid + H(+). The enzyme catalyses a triacylglycerol + H2O = a 1,2-diacylglycerol + a fatty acid + H(+). The catalysed reaction is a triacylglycerol + H2O = a 1,3-diacylglycerol + a fatty acid + H(+). It carries out the reaction a triacyl-sn-glycerol + H2O = a 1,3-diacyl-sn-glycerol + a fatty acid + H(+). It catalyses the reaction a triacyl-sn-glycerol + H2O = a 2,3-diacyl-sn-glycerol + a fatty acid + H(+). The enzyme catalyses a 1-acylglycerol + a 1,3-diacylglycerol = a triacylglycerol + glycerol. The catalysed reaction is a 1-acylglycerol + a 1,2-diacylglycerol = a triacylglycerol + glycerol. It carries out the reaction 2 a 1-acylglycerol = a 1,2-diacylglycerol + glycerol. It catalyses the reaction a triacylglycerol + all-trans-retinol = an all-trans-retinyl ester + a diacylglycerol. The enzyme catalyses 1,2-di-(9Z-octadecenoyl)-glycerol + (9Z)-octadecenoate + H(+) = 1,2,3-tri-(9Z-octadecenoyl)-glycerol + H2O. The catalysed reaction is 1,2,3-tri-(9Z-octadecenoyl)-glycerol + H2O = 1,3-di-(9Z-octadecenoyl)-glycerol + (9Z)-octadecenoate + H(+). It carries out the reaction 1-(9Z-octadecenoyl)-glycerol + 1,3-di-(9Z-octadecenoyl)-glycerol = 1,2,3-tri-(9Z-octadecenoyl)-glycerol + glycerol. It catalyses the reaction 1-(9Z-octadecenoyl)-glycerol + 1,2-di-(9Z-octadecenoyl)-glycerol = 1,2,3-tri-(9Z-octadecenoyl)-glycerol + glycerol. The enzyme catalyses 2 1-(9Z-octadecenoyl)-glycerol = 1,2-di-(9Z-octadecenoyl)-glycerol + glycerol. The catalysed reaction is 1,2,3-tri-(9Z-octadecenoyl)-glycerol + all-trans-retinol = all-trans-retinyl 9Z-octadecenoate + di-(9Z)-octadecenoylglycerol. It carries out the reaction 1,2,3-tri-(9Z)-hexadecenoylglycerol + H2O = 1,3-di-(9Z)-hexadecenoylglycerol + (9Z)-hexadecenoate + H(+). It catalyses the reaction 1,2,3-tri-(9Z,12Z)-octadecadienoylglycerol + H2O = 1,3-di-(9Z,12Z)-octadecadienoylglycerol + (9Z,12Z)-octadecadienoate + H(+). The enzyme catalyses 1,2,3-tri-(9Z,12Z,15Z)-octadecatrienoylglycerol + H2O = 1,3-di-(9Z,12Z,15Z)-octadecatrienoylglycerol + (9Z,12Z,15Z)-octadecatrienoate + H(+). The catalysed reaction is 1,3-di-(9Z)-octadecenoyl-2-hexadecanoylglycerol + H2O = 1,3-di-(9Z-octadecenoyl)-glycerol + hexadecanoate + H(+). It carries out the reaction 1,2-di-(9Z)-octadecenoyl-3-hexadecanoyl-sn-glycerol + H2O = 1-(9Z)-octadecenoyl-3-hexadecanoyl-sn-glycerol + (9Z)-octadecenoate + H(+). It catalyses the reaction 1-hexadecanoyl-2,3-di-(9Z)-octadecenoyl-sn-glycerol + H2O = 1-hexadecanoyl-3-(9Z)-octadecenoyl-sn-glycerol + (9Z)-octadecenoate + H(+). The enzyme catalyses 1,2,3-tri-(9Z-octadecenoyl)-glycerol + H2O = 2,3-di-(9Z)-octadecenoyl-sn-glycerol + (9Z)-octadecenoate + H(+). The catalysed reaction is 1,2,3-tri-(9Z)-hexadecenoylglycerol + H2O = 2,3-di-(9Z)-hexadecenoyl-sn-glycerol + (9Z)-hexadecenoate + H(+). It carries out the reaction 1,2,3-tri-(9Z,12Z)-octadecadienoylglycerol + H2O = 2,3-di-(9Z,12Z)-octadecadienoyl-sn-glycerol + (9Z,12Z)-octadecadienoate + H(+). It catalyses the reaction 1,2,3-tri-(9Z,12Z,15Z)-octadecatrienoylglycerol + H2O = 2,3-di-(9Z,12Z,15Z)-octadecatrienoyl-sn-glycerol + (9Z,12Z,15Z)-octadecatrienoate + H(+). The enzyme catalyses 1,3-di-(9Z)-octadecenoyl-2-hexadecanoylglycerol + H2O = 2-hexadecanoyl-3-(9Z)-octadecenoyl-sn-glycerol + (9Z)-octadecenoate + H(+). The catalysed reaction is 1-hexadecanoyl-2,3-di-(9Z)-octadecenoyl-sn-glycerol + H2O = 2,3-di-(9Z)-octadecenoyl-sn-glycerol + hexadecanoate + H(+). It carries out the reaction 1,2-di-(9Z)-octadecenoyl-3-hexadecanoyl-sn-glycerol + H2O = 2-(9Z-octadecenoyl)-3-hexadecanoyl-sn-glycerol + (9Z)-octadecenoate + H(+). It catalyses the reaction a 1,2-diacyl-sn-glycero-3-phosphocholine + H2O = a 1-acyl-sn-glycero-3-phosphocholine + a fatty acid + H(+). The enzyme catalyses 1,2,3-tri-(9Z-octadecenoyl)-glycerol + 9-hydroxy-octadecanoate = 9-(9Z-octadecenoyloxy)-octadecanoate + 2,3-di-(9Z)-octadecenoyl-sn-glycerol. The catalysed reaction is 1-hexadecanoyl-2,3-di-(9Z)-octadecenoyl-sn-glycerol + 9-hydroxy-octadecanoate = 9-hexadecanoyloxy-octadecanoate + 2,3-di-(9Z)-octadecenoyl-sn-glycerol. It carries out the reaction 1,2,3-tri-(10Z)-heptadecenoylglycerol + 9-hydroxy-octadecanoate = 2,3-di-(10Z-heptadecenoyl)-sn-glycerol + 9-(10Z-heptadecenoyloxy)-octadecanoate. It catalyses the reaction 1,2,3-tri-(9Z,12Z)-octadecadienoylglycerol + 9-hydroxy-octadecanoate = 2,3-di-(9Z,12Z)-octadecadienoyl-sn-glycerol + 9-(9Z,12Z-octadecadienoyloxy)-octadecanoate. The enzyme catalyses 1,2,3-tri-(9Z)-hexadecenoylglycerol + 9-hydroxy-octadecanoate = 2,3-di-(9Z)-hexadecenoyl-sn-glycerol + 9-(9Z-hexadecenoyloxy)-octadecanoate. The catalysed reaction is 9-hydroxy-octadecanoate + 1,2-di-(9Z-octadecenoyl)-sn-glycerol = 9-(9Z-octadecenoyloxy)-octadecanoate + 2-(9Z-octadecenoyl)-glycerol. It carries out the reaction 1-hexadecanoyl-2,3-di-(9Z)-octadecenoyl-sn-glycerol + 9-hydroxy-octadecanoate = 1-hexadecanoyl-3-(9Z)-octadecenoyl-sn-glycerol + 9-(9Z-octadecenoyloxy)-octadecanoate. It functions in the pathway glycerolipid metabolism; triacylglycerol degradation. Functionally, catalyzes the initial step in triglyceride hydrolysis in adipocyte and non-adipocyte lipid droplets. Exhibits a strong preference for the hydrolysis of long-chain fatty acid esters at the sn-2 position of the glycerol backbone and acts coordinately with LIPE/HLS and DGAT2 within the lipolytic cascade. Also possesses acylglycerol transacylase and phospholipase A2 activities. Transfers fatty acid from triglyceride to retinol, hydrolyzes retinylesters, and generates 1,3-diacylglycerol from triglycerides. Regulates adiposome size and may be involved in the degradation of adiposomes. Catalyzes the formation of an ester bond between hydroxy fatty acids and fatty acids derived from triglycerides or diglycerides to generate fatty acid esters of hydroxy fatty acids (FAHFAs) in adipocytes. Acts antagonistically with LDAH in regulation of cellular lipid stores. Inhibits LDAH-stimulated lipid droplet fusion. May play an important role in energy homeostasis. May play a role in the response of the organism to starvation, enhancing hydrolysis of triglycerides and providing free fatty acids to other tissues to be oxidized in situations of energy depletion. This chain is Patatin-like phospholipase domain-containing protein 2 (PNPLA2), found in Bos taurus (Bovine).